The following is a 483-amino-acid chain: Siroheme synthase (483 aa).

The precorrin-2 dehydrogenase /sirohydrochlorin ferrochelatase stretch occupies residues Met-1–Leu-203. Residues Ala-22–Val-23 and Lys-43–His-44 contribute to the NAD(+) site. The residue at position 128 (Ser-128) is a Phosphoserine. Residues Gly-217–Ala-483 form a uroporphyrinogen-III C-methyltransferase region. Pro-226 serves as a coordination point for S-adenosyl-L-methionine. Asp-249 serves as the catalytic Proton acceptor. Lys-271 serves as the catalytic Proton donor. S-adenosyl-L-methionine-binding positions include Gly-302–Asp-304, Val-307, Thr-332–Ala-333, Met-384, and Gly-413.

The protein in the N-terminal section; belongs to the precorrin-2 dehydrogenase / sirohydrochlorin ferrochelatase family. This sequence in the C-terminal section; belongs to the precorrin methyltransferase family.

It catalyses the reaction uroporphyrinogen III + 2 S-adenosyl-L-methionine = precorrin-2 + 2 S-adenosyl-L-homocysteine + H(+). It carries out the reaction precorrin-2 + NAD(+) = sirohydrochlorin + NADH + 2 H(+). The enzyme catalyses siroheme + 2 H(+) = sirohydrochlorin + Fe(2+). Its pathway is cofactor biosynthesis; adenosylcobalamin biosynthesis; precorrin-2 from uroporphyrinogen III: step 1/1. It participates in cofactor biosynthesis; adenosylcobalamin biosynthesis; sirohydrochlorin from precorrin-2: step 1/1. The protein operates within porphyrin-containing compound metabolism; siroheme biosynthesis; precorrin-2 from uroporphyrinogen III: step 1/1. It functions in the pathway porphyrin-containing compound metabolism; siroheme biosynthesis; siroheme from sirohydrochlorin: step 1/1. Its pathway is porphyrin-containing compound metabolism; siroheme biosynthesis; sirohydrochlorin from precorrin-2: step 1/1. Functionally, multifunctional enzyme that catalyzes the SAM-dependent methylations of uroporphyrinogen III at position C-2 and C-7 to form precorrin-2 via precorrin-1. Then it catalyzes the NAD-dependent ring dehydrogenation of precorrin-2 to yield sirohydrochlorin. Finally, it catalyzes the ferrochelation of sirohydrochlorin to yield siroheme. This Neisseria meningitidis serogroup B (strain ATCC BAA-335 / MC58) protein is Siroheme synthase.